The sequence spans 588 residues: Ribonuclease Y (588 aa).

A helical membrane pass occupies residues 7–27 (VLLVAVLLLTVVVVGAVLVGV). One can recognise a KH domain in the interval 278–359 (VVSVLHLPGD…HRIEEVHDLA (82 aa)). The HD domain occupies 404–497 (VLKHLVESAH…TQASDACSGG (94 aa)).

It belongs to the RNase Y family.

Its subcellular location is the cell membrane. Functionally, endoribonuclease that initiates mRNA decay. This Salinispora tropica (strain ATCC BAA-916 / DSM 44818 / JCM 13857 / NBRC 105044 / CNB-440) protein is Ribonuclease Y.